Here is a 732-residue protein sequence, read N- to C-terminus: Elongation factor 2 (732 aa).

Positions 19–230 (ERIRNMGIAA…VSFKDIIDLT (212 aa)) constitute a tr-type G domain. Residues 28-35 (AHIDHGKT), 94-98 (DTPGH), and 148-151 (NKVD) each bind GTP. Position 597 is a diphthamide (H597).

It belongs to the TRAFAC class translation factor GTPase superfamily. Classic translation factor GTPase family. EF-G/EF-2 subfamily.

It is found in the cytoplasm. Catalyzes the GTP-dependent ribosomal translocation step during translation elongation. During this step, the ribosome changes from the pre-translocational (PRE) to the post-translocational (POST) state as the newly formed A-site-bound peptidyl-tRNA and P-site-bound deacylated tRNA move to the P and E sites, respectively. Catalyzes the coordinated movement of the two tRNA molecules, the mRNA and conformational changes in the ribosome. This chain is Elongation factor 2, found in Thermococcus sibiricus (strain DSM 12597 / MM 739).